Here is a 1357-residue protein sequence, read N- to C-terminus: DNA-directed RNA polymerase subunit beta (1357 aa).

Belongs to the RNA polymerase beta chain family. In terms of assembly, the RNAP catalytic core consists of 2 alpha, 1 beta, 1 beta' and 1 omega subunit. When a sigma factor is associated with the core the holoenzyme is formed, which can initiate transcription.

The enzyme catalyses RNA(n) + a ribonucleoside 5'-triphosphate = RNA(n+1) + diphosphate. In terms of biological role, DNA-dependent RNA polymerase catalyzes the transcription of DNA into RNA using the four ribonucleoside triphosphates as substrates. This Pseudomonas aeruginosa (strain UCBPP-PA14) protein is DNA-directed RNA polymerase subunit beta.